Reading from the N-terminus, the 356-residue chain is MVSFGSHTDFSVPHIQIRALNKTYASQGQHVHALKDIDLDIPEGKILGIIGKSGAGKSSLIRTLNGLEHPSSGSIKIYQNELTTLDHDHLIKLRQRIGMIFQHFNLMSAKTVWENVALPLKVSGYDKAEIKNRVDEVLSLVGLAHKADQYPAQLSGGQKQRVGIARALVHHPEILLCDEATSALDPESTSVILNLLKQINQELGITIVLITHEMQVIREICDQVVVIDHGEIVESGQVWSVFSNPVQPITQELLSLEQLELPFDLHREINANSTHSILRIKYQSEAHRSPDLNNILSSFDTPVYLYQSHIDTIQQHLIGNLIIGIPKLDLNINTLQQKLLPFIHHIEVIGYARPTH.

The region spanning 15–254 (IQIRALNKTY…PVQPITQELL (240 aa)) is the ABC transporter domain. 51-58 (GKSGAGKS) contacts ATP.

It belongs to the ABC transporter superfamily. Methionine importer (TC 3.A.1.24) family. The complex is composed of two ATP-binding proteins (MetN), two transmembrane proteins (MetI) and a solute-binding protein (MetQ).

Its subcellular location is the cell inner membrane. The enzyme catalyses L-methionine(out) + ATP + H2O = L-methionine(in) + ADP + phosphate + H(+). It catalyses the reaction D-methionine(out) + ATP + H2O = D-methionine(in) + ADP + phosphate + H(+). Part of the ABC transporter complex MetNIQ involved in methionine import. Responsible for energy coupling to the transport system. The polypeptide is Methionine import ATP-binding protein MetN 1 (Acinetobacter baylyi (strain ATCC 33305 / BD413 / ADP1)).